We begin with the raw amino-acid sequence, 155 residues long: Desiccation-related protein clone PCC6-19 (155 aa).

Positions 1-155 (MAQFGGEKYG…IKEKLPGGQH (155 aa)) are disordered. 2 stretches are compositionally biased toward gly residues: residues 27–39 (AHRGGGIMGGGQQ) and 47–76 (GVLGHGTAGQHGTTGGGLGHGTAGTGGALG). Over residues 83 to 92 (GSSSSSSSSE) the composition is skewed to low complexity. A compositionally biased stretch (polar residues) spans 118-135 (TTTDQQQYGTAATHGQAQ). Residues 136–155 (QHEKKGIMDKIKEKLPGGQH) show a composition bias toward basic and acidic residues.

The protein belongs to the plant dehydrin family.

The polypeptide is Desiccation-related protein clone PCC6-19 (Craterostigma plantagineum (Blue gem)).